We begin with the raw amino-acid sequence, 205 residues long: Regulator of G-protein signaling 4 (205 aa).

Residues Cys2, Cys12, and Cys95 are each lipidated (S-palmitoyl cysteine). The RGS domain occupies 62-178; the sequence is SLENLISHEC…LKSRFYLDLV (117 aa).

In terms of processing, palmitoylated on Cys-2 and/or Cys-12. Phosphorylated by cyclic GMP-dependent protein kinase.

Its function is as follows. Inhibits signal transduction by increasing the GTPase activity of G protein alpha subunits thereby driving them into their inactive GDP-bound form. Activity on G(z)-alpha is inhibited by phosphorylation of the G-protein. Activity on G(z)-alpha and G(i)-alpha-1 is inhibited by palmitoylation of the G-protein. This is Regulator of G-protein signaling 4 (RGS4) from Bos taurus (Bovine).